We begin with the raw amino-acid sequence, 622 residues long: Polypeptide N-acetylgalactosaminyltransferase 6 (622 aa).

Over 1 to 8 (MRLLRRRH) the chain is Cytoplasmic. The chain crosses the membrane as a helical; Signal-anchor for type II membrane protein span at residues 9-28 (MAVRLVMVGSAFVLFLFILQ). At 29–622 (RDVSGREQAT…SDPHQHWLFI (594 aa)) the chain is on the lumenal side. A glycan (N-linked (GlcNAc...) asparagine) is linked at asparagine 86. Residues 103–135 (WERPPQDPNGPGADGKAFQKKEWTPQETQEKEE) form a disordered region. Positions 119–135 (AFQKKEWTPQETQEKEE) are enriched in basic and acidic residues. Positions 176–285 (LPATSVIIVF…HGWLEPLLAR (110 aa)) are catalytic subdomain A. Positions 269, 271, and 407 each coordinate Mn(2+). Residues 348–410 (PIKSPTFAGG…PCSVVGHVFR (63 aa)) form a catalytic subdomain B region. Asparagine 476 carries N-linked (GlcNAc...) asparagine glycosylation. One can recognise a Ricin B-type lectin domain in the interval 507-622 (DHCLDVGENN…SDPHQHWLFI (116 aa)). Cysteine 509 and cysteine 527 are oxidised to a cystine. UDP-N-acetyl-alpha-D-galactosamine contacts are provided by aspartate 511, glutamate 514, histidine 528, and asparagine 533. 2 disulfides stabilise this stretch: cysteine 553/cysteine 566 and cysteine 597/cysteine 610.

Belongs to the glycosyltransferase 2 family. GalNAc-T subfamily. Requires Mn(2+) as cofactor.

It is found in the golgi apparatus membrane. It carries out the reaction L-seryl-[protein] + UDP-N-acetyl-alpha-D-galactosamine = a 3-O-[N-acetyl-alpha-D-galactosaminyl]-L-seryl-[protein] + UDP + H(+). It catalyses the reaction L-threonyl-[protein] + UDP-N-acetyl-alpha-D-galactosamine = a 3-O-[N-acetyl-alpha-D-galactosaminyl]-L-threonyl-[protein] + UDP + H(+). It functions in the pathway protein modification; protein glycosylation. Catalyzes the initial reaction in O-linked oligosaccharide biosynthesis, the transfer of an N-acetyl-D-galactosamine residue to a serine or threonine residue on the protein receptor. May participate in synthesis of oncofetal fibronectin. Has activity toward MUC1A, MUC2, EA2 and fibronectin peptides. The chain is Polypeptide N-acetylgalactosaminyltransferase 6 (GALNT6) from Bos taurus (Bovine).